The sequence spans 347 residues: Photosystem II assembly protein Ycf48 (347 aa).

The first 38 residues, 1 to 38 (MFAKQIDIHWQKMKGIKFLHWLLGTVLLWVSLSTPALA), serve as a signal peptide directing secretion. Positions 202–226 (RGSFYSTWEPGQTAWEPHNRTTSRR) match the Arg-rich patch motif.

This sequence belongs to the Ycf48 family. As to quaternary structure, interacts with the D1 protein (crystallized with PsbA1 or PsbA3), via the latter's C-terminal prepropeptide, may interact with parts of the mature D1 protein as well.

Its subcellular location is the cellular thylakoid lumen. A factor required for optimal assembly of photosystem II (PSII), acting in the early stages of PSII assembly. Also plays a role in replacement of photodamaged D1 (psbA). Assists YidC in synthesis of chlorophyll-binding proteins. In Thermosynechococcus vestitus (strain NIES-2133 / IAM M-273 / BP-1), this protein is Photosystem II assembly protein Ycf48.